A 93-amino-acid chain; its full sequence is Mammaglobin-A (93 aa).

An N-terminal signal peptide occupies residues 1-18 (MKLLMVLMLAALSQHCYA). Residues asparagine 53 and asparagine 68 are each glycosylated (N-linked (GlcNAc...) asparagine).

It belongs to the secretoglobin family. Lipophilin subfamily. As to expression, mammary gland specific. Over-expressed in breast cancer.

Its subcellular location is the secreted. This Homo sapiens (Human) protein is Mammaglobin-A (SCGB2A2).